A 236-amino-acid chain; its full sequence is Large ribosomal subunit protein uL3 (236 aa).

The disordered stretch occupies residues 215 to 236 (PAPEPAAPVAAAAAGTGEEASA). A compositionally biased stretch (low complexity) spans 221–236 (APVAAAAAGTGEEASA).

It belongs to the universal ribosomal protein uL3 family. In terms of assembly, part of the 50S ribosomal subunit. Forms a cluster with proteins L14 and L19.

Functionally, one of the primary rRNA binding proteins, it binds directly near the 3'-end of the 23S rRNA, where it nucleates assembly of the 50S subunit. The chain is Large ribosomal subunit protein uL3 from Parafrankia sp. (strain EAN1pec).